Reading from the N-terminus, the 602-residue chain is Potassium-transporting ATPase potassium-binding subunit (602 aa).

Transmembrane regions (helical) follow at residues 3-23, 64-84, 135-155, 178-198, 282-302, 313-333, 418-438, 456-476, 522-542, and 565-585; these read ANNL…AVPV, QYAL…YALL, GLTV…LALI, LYVL…QGVI, FSNF…CLVF, VAVL…ETSA, GLYG…LMIG, VSIV…IAVL, WMTA…VLAI, and LFVV…YMPA.

It belongs to the KdpA family. As to quaternary structure, the system is composed of three essential subunits: KdpA, KdpB and KdpC.

Its subcellular location is the cell inner membrane. In terms of biological role, part of the high-affinity ATP-driven potassium transport (or Kdp) system, which catalyzes the hydrolysis of ATP coupled with the electrogenic transport of potassium into the cytoplasm. This subunit binds the periplasmic potassium ions and delivers the ions to the membrane domain of KdpB through an intramembrane tunnel. The sequence is that of Potassium-transporting ATPase potassium-binding subunit from Burkholderia pseudomallei (strain K96243).